A 101-amino-acid polypeptide reads, in one-letter code: Cysteine-rich and transmembrane domain-containing protein B (101 aa).

Residues 1–80 (MSQQPPAVGV…PQQQQQQKHS (80 aa)) form a disordered region. A compositionally biased stretch (pro residues) spans 24–43 (DAYPPPGQPYPQQGYPPPQG). Residues 59–77 (YPEQGYPQQGYPPQQQQQQ) are compositionally biased toward low complexity. A helical transmembrane segment spans residues 78–95 (KHSPGMLEGCIAALCCYC).

The protein belongs to the CYSTM1 family.

Its subcellular location is the membrane. This chain is Cysteine-rich and transmembrane domain-containing protein B, found in Arabidopsis thaliana (Mouse-ear cress).